The primary structure comprises 494 residues: NADH-quinone oxidoreductase subunit N 2 (494 aa).

Helical transmembrane passes span 14 to 34, 45 to 65, 82 to 102, 116 to 136, 139 to 159, 174 to 194, 214 to 234, 262 to 282, 289 to 309, 317 to 337, 344 to 364, 388 to 408, 422 to 442, and 470 to 490; these read LPQI…GMLL, IAML…PLTA, VVQV…GSVL, IGEF…LVST, LLLI…LTAF, FLFG…LYGV, LLVA…AAPF, FFVF…NAAW, WMPI…LAAL, LLAY…IAHT, LLYY…VLAI, ACLL…GFFA, AFGL…ALFY, and ITLL…NLLM.

Belongs to the complex I subunit 2 family. In terms of assembly, NDH-1 is composed of 14 different subunits. Subunits NuoA, H, J, K, L, M, N constitute the membrane sector of the complex.

It localises to the cell inner membrane. The enzyme catalyses a quinone + NADH + 5 H(+)(in) = a quinol + NAD(+) + 4 H(+)(out). Functionally, NDH-1 shuttles electrons from NADH, via FMN and iron-sulfur (Fe-S) centers, to quinones in the respiratory chain. The immediate electron acceptor for the enzyme in this species is believed to be ubiquinone. Couples the redox reaction to proton translocation (for every two electrons transferred, four hydrogen ions are translocated across the cytoplasmic membrane), and thus conserves the redox energy in a proton gradient. This Acidobacterium capsulatum (strain ATCC 51196 / DSM 11244 / BCRC 80197 / JCM 7670 / NBRC 15755 / NCIMB 13165 / 161) protein is NADH-quinone oxidoreductase subunit N 2.